The following is a 401-amino-acid chain: MSIISTRLSSIKPSPTLAVVKKTLELKKAGVDIITLGAGEPDFDTPDNIKEGAIKAIKDGFTKYTNVEGMPLLKQAIKDKFKRENNIDYELDEIIVSTGGKQVIYNLFMASLDQGDEVIIPAPYWVSYPDMVALSTGTPVFVNCGIENNFKLSAEALERSITDKTKWLIINSPSNPTGASYNFEELENIAKVLRKYSHVNVMSDDIYEHITFDDFKFYTLAQIAPDLKKRIFTVNGVSKAYSMTGWRIGYGAGSKTLIKAMTIIQSQSTSNPCSISQMAAIEALNGPQDYIKPNALNCQKKRDLALSILKRVKYFECYKPEGAFYLFVKCDKIFGHKTKSGTIIANSNDFAEYLLEEAKVAVVPGIAFGLEGYFRISYATSMEELEKACIRIEKTIDVIPA.

3 residues coordinate L-aspartate: G39, W125, and N175. K239 is subject to N6-(pyridoxal phosphate)lysine. An L-aspartate-binding site is contributed by R375.

It belongs to the class-I pyridoxal-phosphate-dependent aminotransferase family. As to quaternary structure, homodimer. The cofactor is pyridoxal 5'-phosphate.

The protein resides in the cytoplasm. It carries out the reaction L-aspartate + 2-oxoglutarate = oxaloacetate + L-glutamate. It catalyses the reaction L-arogenate + 2-oxoglutarate = prephenate + L-glutamate. In terms of biological role, catalyzes the reversible conversion of aspartate and 2-oxoglutarate to glutamate and oxaloacetate. Can also transaminate prephenate in the presence of glutamate. In Rickettsia conorii (strain ATCC VR-613 / Malish 7), this protein is Probable aspartate/prephenate aminotransferase (aatA).